Here is a 281-residue protein sequence, read N- to C-terminus: Arylamine N-acetyltransferase / N-hydroxyarylamine O-acetyltransferase (281 aa).

Cysteine 69 serves as the catalytic Acyl-thioester intermediate. Catalysis depends on residues histidine 107 and aspartate 122.

Belongs to the arylamine N-acetyltransferase family. As to quaternary structure, monomer and homodimer.

It is found in the cytoplasm. The enzyme catalyses an arylamine + acetyl-CoA = an N-acetylarylamine + CoA. The catalysed reaction is an N-hydroxyarylamine + acetyl-CoA = an N-acetoxyarylamine + CoA. Its activity is regulated as follows. Inhibited by N-ethylmaleimide and iodoacetamide. Its function is as follows. Catalyzes both the acetyl-CoA-dependent N-acetylation of aromatic amines and the O-acetylation of N-hydroxyarylamines. In vitro, catalyzes the O-acetylation of N-hydroxy-Glu-P-1, and the N-acetylation of isoniazid and 2-aminofluorene. This Salmonella typhimurium (strain LT2 / SGSC1412 / ATCC 700720) protein is Arylamine N-acetyltransferase / N-hydroxyarylamine O-acetyltransferase (nhoA).